Here is a 486-residue protein sequence, read N- to C-terminus: Matrilin-3 (486 aa).

The first 28 residues, 1–28 (MPRPAPARRLPGLLLLLWPLLLLPSAAP), serve as a signal peptide directing secretion. Residues 32–75 (ARPGFRRLETRGPGGSPGRRPSPAAPDGAPASGTSEPGRARGAG) are disordered. Residues 49 to 64 (GRRPSPAAPDGAPASG) are compositionally biased toward low complexity. Residues 83-258 (DLVFIIDSSR…GVIEKLSSRF (176 aa)) form the VWFA domain. Omega-N-methylarginine is present on R198. 4 EGF-like domains span residues 264 to 305 (ALDP…KTCS), 306 to 347 (ALDR…KTCS), 348 to 389 (AQDK…KTCS), and 390 to 431 (VRDK…KTCS). 12 disulfide bridges follow: C268–C279, C275–C289, C291–C304, C310–C321, C317–C331, C333–C346, C352–C363, C359–C373, C375–C388, C394–C405, C401–C415, and C417–C430. A Phosphoserine; by FAM20C modification is found at S441. A Phosphothreonine; by FAM20C modification is found at T442. The stretch at 456 to 480 (DKVSSYLQRLNTKLDDILEKLKINE) forms a coiled coil.

Can form homooligomers (monomers, dimers, trimers and tetramers) and heterooligomers with matrilin-1. Interacts with COMP. Component of a complex containing at least CRELD2, MANF, MATN3 and PDIA4. As to expression, expressed only in cartilaginous tissues, such as vertebrae, ribs and shoulders.

The protein localises to the secreted. Major component of the extracellular matrix of cartilage and may play a role in the formation of extracellular filamentous networks. This chain is Matrilin-3 (MATN3), found in Homo sapiens (Human).